Reading from the N-terminus, the 252-residue chain is Imidazole glycerol phosphate synthase subunit HisF (252 aa).

Active-site residues include aspartate 11 and aspartate 130.

It belongs to the HisA/HisF family. Heterodimer of HisH and HisF.

The protein localises to the cytoplasm. The enzyme catalyses 5-[(5-phospho-1-deoxy-D-ribulos-1-ylimino)methylamino]-1-(5-phospho-beta-D-ribosyl)imidazole-4-carboxamide + L-glutamine = D-erythro-1-(imidazol-4-yl)glycerol 3-phosphate + 5-amino-1-(5-phospho-beta-D-ribosyl)imidazole-4-carboxamide + L-glutamate + H(+). The protein operates within amino-acid biosynthesis; L-histidine biosynthesis; L-histidine from 5-phospho-alpha-D-ribose 1-diphosphate: step 5/9. Functionally, IGPS catalyzes the conversion of PRFAR and glutamine to IGP, AICAR and glutamate. The HisF subunit catalyzes the cyclization activity that produces IGP and AICAR from PRFAR using the ammonia provided by the HisH subunit. The sequence is that of Imidazole glycerol phosphate synthase subunit HisF from Azobacteroides pseudotrichonymphae genomovar. CFP2.